Here is a 365-residue protein sequence, read N- to C-terminus: Ribosome biogenesis regulatory protein homolog (365 aa).

Met1 carries the post-translational modification N-acetylmethionine. Position 5 is a phosphoserine (Ser5). Glycyl lysine isopeptide (Lys-Gly) (interchain with G-Cter in SUMO2) cross-links involve residues Lys154 and Lys226. The tract at residues 233–253 (GRFQERLPKEKVPRGSGKKRK) is disordered. Positions 235–245 (FQERLPKEKVP) are enriched in basic and acidic residues. Lys266 participates in a covalent cross-link: Glycyl lysine isopeptide (Lys-Gly) (interchain with G-Cter in SUMO2). Arg273 carries the citrulline modification. The segment at 280–365 (PQLDVTRATN…GQRPGGKRRK (86 aa)) is disordered. The segment covering 302–325 (KRRKMSQKGKRKGGRQGPGGKRKG) has biased composition (basic residues). Over residues 337 to 350 (GLGGKMNSGPPGLG) the composition is skewed to gly residues. Residues 351 to 365 (GKRKGGQRPGGKRRK) are compositionally biased toward basic residues.

The protein belongs to the RRS1 family. In terms of assembly, component of a hexameric 5S RNP precursor complex, composed of 5S RNA, RRS1, RPF2/BXDC1, RPL5, RPL11 and HEATR3; this complex acts as a precursor for ribosome assembly. Post-translationally, citrullinated by PADI4.

The protein resides in the nucleus. The protein localises to the nucleolus. Functionally, involved in ribosomal large subunit assembly. May regulate the localization of the 5S RNP/5S ribonucleoprotein particle to the nucleolus. This is Ribosome biogenesis regulatory protein homolog (RRS1) from Homo sapiens (Human).